The following is a 405-amino-acid chain: Acetate kinase (405 aa).

Asparagine 7 contacts Mg(2+). ATP is bound at residue lysine 14. Residue arginine 98 coordinates substrate. Aspartate 155 acts as the Proton donor/acceptor in catalysis. ATP is bound by residues 214-218, 289-291, and 337-341; these read HLGNG, DLR, and GVGEN. Residue glutamate 390 coordinates Mg(2+).

The protein belongs to the acetokinase family. As to quaternary structure, homodimer. The cofactor is Mg(2+). Mn(2+) serves as cofactor.

The protein resides in the cytoplasm. The enzyme catalyses acetate + ATP = acetyl phosphate + ADP. The protein operates within metabolic intermediate biosynthesis; acetyl-CoA biosynthesis; acetyl-CoA from acetate: step 1/2. In terms of biological role, catalyzes the formation of acetyl phosphate from acetate and ATP. Can also catalyze the reverse reaction. This chain is Acetate kinase, found in Gloeothece citriformis (strain PCC 7424) (Cyanothece sp. (strain PCC 7424)).